The sequence spans 253 residues: Mediator of RNA polymerase II transcription subunit 10 (253 aa).

Disordered regions lie at residues 32–63 (YDTN…HASS), 88–109 (LPSS…TELE), and 206–253 (VEAT…QSGQ). Over residues 34-47 (TNPSSSNNNTPTSS) the composition is skewed to low complexity. Over residues 50–60 (SGGGGGGGGGH) the composition is skewed to gly residues. Residues 88–104 (LPSSPSSGPSNNQPQQG) show a composition bias toward low complexity. Over residues 231 to 253 (SAGGEGQQGQGQGQQGQGQQSGQ) the composition is skewed to gly residues.

The protein belongs to the Mediator complex subunit 10 family. In terms of assembly, component of the Mediator complex.

It is found in the nucleus. Its function is as follows. Component of the Mediator complex, a coactivator involved in the regulated transcription of nearly all RNA polymerase II-dependent genes. Mediator functions as a bridge to convey information from gene-specific regulatory proteins to the basal RNA polymerase II transcription machinery. Mediator is recruited to promoters by direct interactions with regulatory proteins and serves as a scaffold for the assembly of a functional preinitiation complex with RNA polymerase II and the general transcription factors. The protein is Mediator of RNA polymerase II transcription subunit 10 (nut2) of Neurospora crassa (strain ATCC 24698 / 74-OR23-1A / CBS 708.71 / DSM 1257 / FGSC 987).